The chain runs to 537 residues: Phosphoenolpyruvate carboxykinase (ATP) (537 aa).

The substrate site is built by Arg-61, Tyr-194, and Lys-200. Residues Lys-200, His-219, and 235–243 (GLSGTGKTT) contribute to the ATP site. 2 residues coordinate Mn(2+): Lys-200 and His-219. Mn(2+) is bound at residue Asp-256. Residues Glu-284, Arg-322, and Thr-448 each coordinate ATP. Arg-322 serves as a coordination point for substrate.

It belongs to the phosphoenolpyruvate carboxykinase (ATP) family. The cofactor is Mn(2+).

The protein localises to the cytoplasm. The catalysed reaction is oxaloacetate + ATP = phosphoenolpyruvate + ADP + CO2. The protein operates within carbohydrate biosynthesis; gluconeogenesis. In terms of biological role, involved in the gluconeogenesis. Catalyzes the conversion of oxaloacetate (OAA) to phosphoenolpyruvate (PEP) through direct phosphoryl transfer between the nucleoside triphosphate and OAA. The sequence is that of Phosphoenolpyruvate carboxykinase (ATP) from Bradyrhizobium sp. (strain BTAi1 / ATCC BAA-1182).